Here is a 714-residue protein sequence, read N- to C-terminus: Polyribonucleotide nucleotidyltransferase (714 aa).

The Mg(2+) site is built by Asp489 and Asp495. Residues Pro556–Ile615 enclose the KH domain. In terms of domain architecture, S1 motif spans Gly625–Lys693. The interval Ser691–Asp714 is disordered. The span at Pro700–Asp714 shows a compositional bias: basic and acidic residues.

Belongs to the polyribonucleotide nucleotidyltransferase family. It depends on Mg(2+) as a cofactor.

The protein localises to the cytoplasm. It catalyses the reaction RNA(n+1) + phosphate = RNA(n) + a ribonucleoside 5'-diphosphate. Involved in mRNA degradation. Catalyzes the phosphorolysis of single-stranded polyribonucleotides processively in the 3'- to 5'-direction. This chain is Polyribonucleotide nucleotidyltransferase, found in Streptococcus equi subsp. zooepidemicus (strain H70).